Reading from the N-terminus, the 595-residue chain is Adenine deaminase 2 (595 aa).

The protein belongs to the metallo-dependent hydrolases superfamily. Adenine deaminase family. Mn(2+) serves as cofactor.

It carries out the reaction adenine + H2O + H(+) = hypoxanthine + NH4(+). In Rhizobium johnstonii (strain DSM 114642 / LMG 32736 / 3841) (Rhizobium leguminosarum bv. viciae), this protein is Adenine deaminase 2.